Consider the following 144-residue polypeptide: Putative pre-16S rRNA nuclease (144 aa).

It belongs to the YqgF nuclease family.

The protein resides in the cytoplasm. Could be a nuclease involved in processing of the 5'-end of pre-16S rRNA. The sequence is that of Putative pre-16S rRNA nuclease from Lactiplantibacillus plantarum (strain ATCC BAA-793 / NCIMB 8826 / WCFS1) (Lactobacillus plantarum).